The sequence spans 763 residues: Dual specificity tyrosine-phosphorylation-regulated kinase 1A (763 aa).

Serine 14 carries the phosphoserine modification. Positions 33 to 56 (QMPHSHQYSDRRQPNISDQQVSAL) are disordered. Polar residues predominate over residues 46–56 (PNISDQQVSAL). Residue tyrosine 111 is modified to Phosphotyrosine; by autocatalysis. A disordered region spans residues 115–136 (KKRRHQQGQGDDSSHKKERKVY). A Bipartite nuclear localization signal motif is present at residues 117–134 (RRHQQGQGDDSSHKKERK). Tyrosine 140 is subject to Phosphotyrosine; by autocatalysis. A Phosphotyrosine modification is found at tyrosine 145. The residue at position 159 (tyrosine 159) is a Phosphotyrosine; by autocatalysis. The Protein kinase domain maps to 159–479 (YEIDSLIGKG…PYYALQHSFF (321 aa)). 165-173 (IGKGSFGQV) lines the ATP pocket. Tyrosine 177 is modified (phosphotyrosine; by autocatalysis). Position 188 (lysine 188) interacts with ATP. Tyrosine 219 is modified (phosphotyrosine; by autocatalysis). 238-241 (FEML) provides a ligand contact to ATP. Aspartate 287 (proton acceptor) is an active-site residue. Serine 310 bears the Phosphoserine; by autocatalysis mark. A phosphotyrosine; by autocatalysis mark is found at tyrosine 319 and tyrosine 321. Position 402 is a phosphothreonine; by autocatalysis (threonine 402). The interval 408–442 (TKDGKREYKPPGTRKLHNILGVETGGPGGRRAGES) is disordered. The residue at position 449 (tyrosine 449) is a Phosphotyrosine; by autocatalysis. A compositionally biased stretch (polar residues) spans 485 to 501 (EGTNTSNSVSTSPAMEQ). Disordered regions lie at residues 485–540 (EGTN…HSGG), 596–679 (NALH…GNQA), and 744–763 (DREE…VASS). Positions 502–525 (SQSSGTTSSTSSSSGGSSGTSNSG) are enriched in low complexity. 2 positions are modified to phosphoserine: serine 529 and serine 538. Residues 595–625 (QNALHHHHGNSSHHHHHHHHHHHHHGQQALG) form a histidine-rich domain (HRD) region. The span at 598 to 620 (LHHHHGNSSHHHHHHHHHHHHHG) shows a compositional bias: basic residues. Residues 634 to 645 (NSPTNSSSTQDS) are compositionally biased toward polar residues. Over residues 654-672 (SMTSLSSSTTSSSTSSSST) the composition is skewed to low complexity. Phosphoserine occurs at positions 748 and 758. Polar residues predominate over residues 754–763 (CVQQSPVASS).

The protein belongs to the protein kinase superfamily. CMGC Ser/Thr protein kinase family. MNB/DYRK subfamily. As to quaternary structure, interacts with RAD54L2/ARIP4. Interacts with CRY2. Interacts with RANBP9. Interacts with WDR68. Interacts with SIRT1. Post-translationally, can also autophosphorylate on serine and threonine residues (in vitro). Autophosphorylated on numerous tyrosine residues. In terms of tissue distribution, detected in brain (at protein level). Ubiquitous.

The protein resides in the nucleus speckle. The enzyme catalyses L-seryl-[protein] + ATP = O-phospho-L-seryl-[protein] + ADP + H(+). It catalyses the reaction L-threonyl-[protein] + ATP = O-phospho-L-threonyl-[protein] + ADP + H(+). It carries out the reaction L-tyrosyl-[protein] + ATP = O-phospho-L-tyrosyl-[protein] + ADP + H(+). The catalysed reaction is [DNA-directed RNA polymerase] + ATP = phospho-[DNA-directed RNA polymerase] + ADP + H(+). With respect to regulation, inhibited by RANBP9. Inhibited by harmine, leucettamine B and leucettine L41. Dual-specificity kinase which possesses both serine/threonine and tyrosine kinase activities. Exhibits a substrate preference for proline at position P+1 and arginine at position P-3. Plays an important role in double-strand breaks (DSBs) repair following DNA damage. Mechanistically, phosphorylates RNF169 and increases its ability to block accumulation of TP53BP1 at the DSB sites thereby promoting homologous recombination repair (HRR). Also acts as a positive regulator of transcription by acting as a CTD kinase that mediates phosphorylation of the CTD (C-terminal domain) of the large subunit of RNA polymerase II (RNAP II) POLR2A. May play a role in a signaling pathway regulating nuclear functions of cell proliferation. Modulates alternative splicing by phosphorylating the splice factor SRSF6. Has pro-survival function and negatively regulates the apoptotic process. Promotes cell survival upon genotoxic stress through phosphorylation of SIRT1. This in turn inhibits p53/TP53 activity and apoptosis. Phosphorylates SEPTIN4, SEPTIN5 and SF3B1 at 'Thr-434'. The protein is Dual specificity tyrosine-phosphorylation-regulated kinase 1A (Dyrk1a) of Rattus norvegicus (Rat).